The following is a 204-amino-acid chain: Dephospho-CoA kinase (204 aa).

Positions 4–201 constitute a DPCK domain; sequence VIGLTGGIAS…EKYLAMCKKN (198 aa). 12–17 contributes to the ATP binding site; the sequence is ASGKTT.

Belongs to the CoaE family.

The protein localises to the cytoplasm. The catalysed reaction is 3'-dephospho-CoA + ATP = ADP + CoA + H(+). Its pathway is cofactor biosynthesis; coenzyme A biosynthesis; CoA from (R)-pantothenate: step 5/5. Its function is as follows. Catalyzes the phosphorylation of the 3'-hydroxyl group of dephosphocoenzyme A to form coenzyme A. This chain is Dephospho-CoA kinase, found in Vibrio parahaemolyticus serotype O3:K6 (strain RIMD 2210633).